The chain runs to 297 residues: Transmembrane protein 169 (297 aa).

Residues 1–88 are disordered; sequence MEESAPVESQ…EGEDFLDYPG (88 aa). At 1-159 the chain is on the extracellular side; it reads MEESAPVESQ…CQVGADQGPH (159 aa). Residues 22 to 31 show a composition bias toward low complexity; it reads RRAVAAVLAL. Acidic residues-rich tracts occupy residues 61–70 and 78–88; these read KTDEEPEESE and EEGEDFLDYPG. A helical membrane pass occupies residues 160 to 180; sequence VVLWTLVCLPVVFVLSFVVSF. Topologically, residues 181-210 are cytoplasmic; that stretch reads YYGTITWYNIFLVYNEERTFWHKISCCPCL. A helical transmembrane segment spans residues 211–231; sequence ILFYPVLIMTMASSLGLYAAV. The Extracellular portion of the chain corresponds to 232–297; it reads AQLSWSWAAW…PIQEVETSTV (66 aa).

The protein localises to the membrane. This chain is Transmembrane protein 169 (Tmem169), found in Mus musculus (Mouse).